Reading from the N-terminus, the 259-residue chain is Small ribosomal subunit protein eS1 (259 aa).

A compositionally biased stretch (basic residues) spans 1–18; that stretch reads MAVGKNKRISKGKKGGKK. Residues 1–22 form a disordered region; that stretch reads MAVGKNKRISKGKKGGKKKASD.

Belongs to the eukaryotic ribosomal protein eS1 family. As to quaternary structure, component of the small ribosomal subunit. Mature ribosomes consist of a small (40S) and a large (60S) subunit. The 40S subunit contains about 33 different proteins and 1 molecule of RNA (18S). The 60S subunit contains about 49 different proteins and 3 molecules of RNA (25S, 5.8S and 5S).

Its subcellular location is the cytoplasm. In Chlamydomonas reinhardtii (Chlamydomonas smithii), this protein is Small ribosomal subunit protein eS1.